Consider the following 1372-residue polypeptide: Capping protein, Arp2/3 and myosin-I linker protein 3 (1372 aa).

Residues 126–151 form a disordered region; sequence RGNADTPEGPRDTSPNSETSTSTTHS. The span at 138–151 shows a compositional bias: low complexity; it reads TSPNSETSTSTTHS. LRR repeat units lie at residues 244-264, 274-295, 303-323, 335-357, 365-385, 392-413, 424-444, 455-475, 482-501, and 509-530; these read SLEE…QKLA, VLHA…SLSQ, GLTK…QALG, SLRY…NALY, ALVH…LGAL, HLTY…EAPP, TLSH…RALL, DLHL…ALQE, CVGS…LTLV, and SLKH…EEIL. Disordered stretches follow at residues 865–900, 970–1003, and 1024–1372; these read TLSD…ELGT, KLRH…RQEN, and ESSS…PGTD. A compositionally biased stretch (pro residues) spans 982 to 995; sequence PRTTPPGPGRPSMP. The segment at 1040–1073 is necessary for localization at the cell membrane; sequence SEAPLPPLQKKRRRGLFHFRRPRSFKGDRGPGSP. Residues 1048 to 1063 are compositionally biased toward basic residues; that stretch reads QKKRRRGLFHFRRPRS. Positions 1079 to 1098 are enriched in pro residues; that stretch reads LPPPPPPPPTQESPPSPDPP. Low complexity predominate over residues 1099 to 1109; that stretch reads SLGNNSSPCWS. Basic and acidic residues-rich tracts occupy residues 1163–1177 and 1219–1229; these read ERAK…REGP and RRAEATWHIAE. A compositionally biased stretch (polar residues) spans 1233-1244; it reads PNHSCQSPSPAS. The span at 1348-1361 shows a compositional bias: basic and acidic residues; that stretch reads QSCDKLEPDRRRPP.

It belongs to the CARMIL family. In terms of tissue distribution, widely expressed, with much higher levels in fetal tissues than in adult ones. Up-regulated in certain cancer tissues.

It localises to the cytoplasm. Its subcellular location is the cell membrane. The chain is Capping protein, Arp2/3 and myosin-I linker protein 3 from Homo sapiens (Human).